The primary structure comprises 174 residues: Urease accessory protein UreE (174 aa).

It belongs to the UreE family.

The protein localises to the cytoplasm. Functionally, involved in urease metallocenter assembly. Binds nickel. Probably functions as a nickel donor during metallocenter assembly. The chain is Urease accessory protein UreE from Helicobacter hepaticus (strain ATCC 51449 / 3B1).